A 1026-amino-acid polypeptide reads, in one-letter code: Multidrug resistance protein MdtC (1026 aa).

11 helical membrane passes run I15 to A35, E333 to L353, L360 to C380, L387 to L407, V431 to L451, F463 to P483, L528 to P548, L853 to S873, L897 to V917, P953 to G973, and I984 to V1004.

The protein belongs to the resistance-nodulation-cell division (RND) (TC 2.A.6) family. MdtC subfamily. In terms of assembly, part of a tripartite efflux system composed of MdtA, MdtB and MdtC. MdtC forms a heteromultimer with MdtB.

Its subcellular location is the cell inner membrane. This chain is Multidrug resistance protein MdtC, found in Salmonella paratyphi B (strain ATCC BAA-1250 / SPB7).